We begin with the raw amino-acid sequence, 189 residues long: Large ribosomal subunit protein eL19A (189 aa).

Residue Lys21 forms a Glycyl lysine isopeptide (Lys-Gly) (interchain with G-Cter in ubiquitin) linkage. A phosphoserine mark is found at Ser30 and Ser37. Glycyl lysine isopeptide (Lys-Gly) (interchain with G-Cter in ubiquitin) cross-links involve residues Lys53 and Lys60. Residues His58 to Arg85 are disordered. Over residues Ser59–Gln68 the composition is skewed to basic residues. Ser91 carries the phosphoserine modification. Residues Lys146 and Lys186 each participate in a glycyl lysine isopeptide (Lys-Gly) (interchain with G-Cter in ubiquitin) cross-link. The disordered stretch occupies residues Leu164–Ala189.

This sequence belongs to the eukaryotic ribosomal protein eL19 family. Component of the large ribosomal subunit (LSU). Mature yeast ribosomes consist of a small (40S) and a large (60S) subunit. The 40S small subunit contains 1 molecule of ribosomal RNA (18S rRNA) and 33 different proteins (encoded by 57 genes). The large 60S subunit contains 3 rRNA molecules (25S, 5.8S and 5S rRNA) and 46 different proteins (encoded by 81 genes). eL19 lies in close proximity to the binding site for eukaryotic initiation factor eIF4G.

It localises to the cytoplasm. Component of the ribosome, a large ribonucleoprotein complex responsible for the synthesis of proteins in the cell. The small ribosomal subunit (SSU) binds messenger RNAs (mRNAs) and translates the encoded message by selecting cognate aminoacyl-transfer RNA (tRNA) molecules. The large subunit (LSU) contains the ribosomal catalytic site termed the peptidyl transferase center (PTC), which catalyzes the formation of peptide bonds, thereby polymerizing the amino acids delivered by tRNAs into a polypeptide chain. The nascent polypeptides leave the ribosome through a tunnel in the LSU and interact with protein factors that function in enzymatic processing, targeting, and the membrane insertion of nascent chains at the exit of the ribosomal tunnel. eL19 may play a role in the last stages of translation initiation, in particular subunit joining and shedding/releasing factors. This Saccharomyces cerevisiae (strain ATCC 204508 / S288c) (Baker's yeast) protein is Large ribosomal subunit protein eL19A.